Reading from the N-terminus, the 615-residue chain is Melanopsin-B (615 aa).

Residues 1-19 (MDMDRGFYRKVDVPDHAHY) are Extracellular-facing. Residues 20 to 40 (VIAFFVLIIGVVGVTGNALVM) form a helical membrane-spanning segment. Topologically, residues 41 to 56 (YAFLCNKKLRTPPNYF) are cytoplasmic. Residues 57–77 (IMNLAVSDFLMAITQSPIFFI) traverse the membrane as a helical segment. Over 78–93 (NSLFKEWIFGETGCRM) the chain is Extracellular. A disulfide bridge connects residues cysteine 91 and cysteine 169. The helical transmembrane segment at 94-114 (YAFCGALFGITSMINLLAISL) threads the bilayer. Topologically, residues 115–136 (DRYIVITKPPQAIRWVSGRRTM) are cytoplasmic. The chain crosses the membrane as a helical span at residues 137-157 (VVILLVWLYSLAWSLAPLLGW). The Extracellular portion of the chain corresponds to 158 to 189 (SSYIPEGLMTSCTWDYVTSTPANKGYTLMLCC). A helical membrane pass occupies residues 190–210 (FVFFIPLGIISYCYLCMFLAI). Residues 211 to 244 (RSAGREIERLGTQVRKSTLMQQQTIKTEWKLTKV) are Cytoplasmic-facing. Residues 245–265 (AFVVIIVYVHSWSPYACVTLI) form a helical membrane-spanning segment. Over 266-279 (AWAGYGSHLSPYSK) the chain is Extracellular. Residues 280–300 (AVPAVIAKASAIYNPFIYAII) form a helical membrane-spanning segment. Lysine 287 bears the N6-(retinylidene)lysine mark. Residues 301-615 (HSKYRDTLAE…RNLEESFMAL (315 aa)) lie on the Cytoplasmic side of the membrane. Disordered stretches follow at residues 390–420 (LGRSKEHRGPPAQQNRQTRSSDTLEQATVAD) and 465–502 (NKHPNNNHKNHNNRHNGNNNNEEHEYSGKGGRHCQNHP). A compositionally biased stretch (polar residues) spans 401–415 (AQQNRQTRSSDTLEQ). Residues 469–478 (NNNHKNHNNR) show a composition bias toward basic residues.

The protein belongs to the G-protein coupled receptor 1 family. Opsin subfamily. In terms of tissue distribution, expressed in the inner nuclear layer of the retina, possibly in amacrine and ganglion cells. Expressed in a subpopulation of neurons in the dorsal habenula.

The protein resides in the cell membrane. Its function is as follows. Photoreceptor implicated in non-image-forming responses to light. The chain is Melanopsin-B (opn4b) from Gadus morhua (Atlantic cod).